The chain runs to 1793 residues: Nucleoporin NUP145 (1793 aa).

GLFG repeat units follow at residues 50–53, 143–146, 255–258, 282–285, 292–295, 306–309, 336–339, 381–384, and 395–398; these read GLFG. 4 disordered regions span residues 404 to 583, 740 to 859, 999 to 1043, and 1066 to 1097; these read GSAF…QQPQ, RTDL…EPGA, GDDD…DDTF, and EVAN…PEDE. A compositionally biased stretch (polar residues) spans 417 to 431; that stretch reads NQSTGTSLFGNTQQK. GLFG repeat units lie at residues 434 to 437, 446 to 449, 470 to 473, 481 to 484, and 496 to 499; these read GLFG. The segment covering 437–459 has biased composition (low complexity); that stretch reads GSTTTNTSGGLFGSTNTGTSTFG. Residues 467 to 483 are compositionally biased toward gly residues; the sequence is TGGGLFGSKPAGTGGLF. Positions 500–511 are enriched in polar residues; it reads NLNTNAQTQQPA. Residues 514–517 form a GLFG 15 repeat; that stretch reads GLFG. Residues 518-535 are compositionally biased toward low complexity; it reads NLGQNNQAKPSLFGTSTT. A GLFG 16 repeat occupies 539–542; sequence GLFG. 2 stretches are compositionally biased toward polar residues: residues 546 to 575 and 801 to 813; these read AQQQ…FGSS and STAN…NGAK. The segment covering 814 to 823 has biased composition (low complexity); that stretch reads SSPVAAASPP. Residues 826–840 show a composition bias toward basic and acidic residues; the sequence is EQVKGKELAVVHEEE. The Peptidase S59 domain maps to 857–993; it reads PGAYWMSPTA…GVWAFSVEHF (137 aa). The nucleoporin RNA-binding motif (NRM) stretch occupies residues 859-992; it reads AYWMSPTADD…TGVWAFSVEH (134 aa). Positions 999 to 1013 are enriched in acidic residues; that stretch reads GDDDDYDDDDYETEP. Residues 1025–1037 show a composition bias toward low complexity; sequence TSPSISKSSTSPI.

This sequence belongs to the nucleoporin GLFG family. In terms of assembly, component of the nuclear pore complex (NPC). NPC constitutes the exclusive means of nucleocytoplasmic transport. NPCs allow the passive diffusion of ions and small molecules and the active, nuclear transport receptor-mediated bidirectional transport of macromolecules such as proteins, RNAs, ribonucleoparticles (RNPs), and ribosomal subunits across the nuclear envelope. Due to its 8-fold rotational symmetry, all subunits are present with 8 copies or multiples thereof. NUP145 is autocatalytically cleaved in NUP145N and NUP145C.

The protein resides in the nucleus. It is found in the nuclear pore complex. Its subcellular location is the nucleus membrane. Functionally, functions as a component of the nuclear pore complex (NPC). NPC components, collectively referred to as nucleoporins (NUPs), can play the role of both NPC structural components and of docking or interaction partners for transiently associated nuclear transport factors. Active directional transport is assured by both, a Phe-Gly (FG) repeat affinity gradient for these transport factors across the NPC and a transport cofactor concentration gradient across the nuclear envelope. NUP145 is autocatalytically cleaved in vivo in 2 polypeptides which assume different functions in the NPC. NUP145N as one of the FG repeat nucleoporins participates in karyopherin interactions and contains part of the autocatalytic cleavage activity. NUP145C as part of the NUP84 complex is involved in nuclear poly(A)+ RNA and tRNA export. The chain is Nucleoporin NUP145 (NUP145) from Chaetomium thermophilum (strain DSM 1495 / CBS 144.50 / IMI 039719) (Thermochaetoides thermophila).